Here is a 694-residue protein sequence, read N- to C-terminus: PTS system fructose-specific EIIABC component (694 aa).

Residues 4-149 enclose the PTS EIIA type-2 domain; sequence PLLSAELFFN…NGLINLIDSF (146 aa). The active-site Tele-phosphohistidine intermediate; for EIIA activity is the histidine 68. Histidine 68 carries the phosphohistidine; by HPr modification. The 97-residue stretch at 179–275 folds into the PTS EIIB type-2 domain; the sequence is FVAVTACPTG…PQTVYDQVVK (97 aa). Catalysis depends on cysteine 185, which acts as the Phosphocysteine intermediate; for EIIB activity. A Phosphocysteine; by EIIA modification is found at cysteine 185. A PTS EIIC type-2 domain is found at 310–687; sequence IYRAILSGVS…NLLVVRKKTK (378 aa). Transmembrane regions (helical) follow at residues 318 to 338, 364 to 384, 390 to 410, 422 to 442, 461 to 481, 502 to 522, 542 to 562, 576 to 596, 602 to 622, and 655 to 675; these read VSYM…AFLI, GGLS…FALV, LPGF…IDIV, VSSG…LIIV, ILFI…VINI, LAPL…GGPV, VAMA…AIAA, AAYA…IPFV, IMLA…GAFA, and GVGL…GIII.

The protein localises to the cell membrane. It catalyses the reaction D-fructose(out) + N(pros)-phospho-L-histidyl-[protein] = D-fructose 1-phosphate(in) + L-histidyl-[protein]. Functionally, the phosphoenolpyruvate-dependent sugar phosphotransferase system (sugar PTS), a major carbohydrate active transport system, catalyzes the phosphorylation of incoming sugar substrates concomitantly with their translocation across the cell membrane. This system is involved in fructose transport. The polypeptide is PTS system fructose-specific EIIABC component (Mycoplasma pneumoniae (strain ATCC 29342 / M129 / Subtype 1) (Mycoplasmoides pneumoniae)).